The chain runs to 465 residues: Myosin-6 (465 aa).

One can recognise a Myosin motor domain in the interval 1-35 (ILERGDALLVVQWNIRAFTGVKKWPWMELYFEIEP). The stretch at 36–465 (LLKSAEAEKE…YRRKLEEAQR (430 aa)) forms a coiled coil. Phosphoserine is present on residues Ser-285 and Ser-334. Tyr-456 is modified (phosphotyrosine).

In terms of assembly, muscle myosin is a hexameric protein that consists of 2 heavy chain subunits (MHC), 2 alkali light chain subunits (MLC) and 2 regulatory light chain subunits (MLC-2).

The protein resides in the cytoplasm. The protein localises to the myofibril. Functionally, muscle contraction. The polypeptide is Myosin-6 (MYH6) (Oryctolagus cuniculus (Rabbit)).